Here is a 341-residue protein sequence, read N- to C-terminus: HTH-type sugar sensing transcriptional regulator TrmBL1 (341 aa).

The segment at residues 32–53 is a DNA-binding region (H-T-H motif); sequence SKATDVTKESGIPHTRIYDVLS.

It belongs to the transcriptional regulator TrmB family. As to quaternary structure, homotetramer. Forms homooctamers in the presence of maltotriose or maltose.

Its activity is regulated as follows. Repressor activity is regulated by binding of different sugars to TrmBL1. Binding of maltose and maltotriose results in derepression of the target genes. However, high sugar concentration results in formation of octamers with high affinity for DNA, which may prevent transcription of target genes. Global transcriptional repressor of the maltodextrin transport gene cluster (mdxE operon) and most likely of all genes encoding glycolytic enzymes. Acts by binding to the conserved TGM (Thermococcales-Glycolytic-Motif) sequences in their promoter region. Can also interact with non-TGM sequences. The protein is HTH-type sugar sensing transcriptional regulator TrmBL1 (trmBL1) of Pyrococcus furiosus (strain ATCC 43587 / DSM 3638 / JCM 8422 / Vc1).